Consider the following 383-residue polypeptide: tRNA (guanine-N(7)-)-methyltransferase non-catalytic subunit wuho (383 aa).

WD repeat units lie at residues 61 to 101 (NLEV…ALLL), 105 to 144 (ALAR…APPK), 148 to 187 (GHLS…DIHS), 191 to 231 (GHKE…EVLQ), and 289 to 329 (AGSW…QAES).

It belongs to the WD repeat TRM82 family. As to quaternary structure, forms a heterodimer with the catalytic subunit Mettl1. Interacts with mei-P26 and weakly interacts with bgcn; required for the function or formation of the mei-P26-bgcn-bam-sxl complex. Interacts with nanos; may be involved in mei-P26-dependent derepression of the BMP signaling pathway. Interacts with Myc; the interaction may be mediated by mei-P26 and may be involved in the regulation of ribosome biogenesis. In testis, it is present at high level in hub cells, a niche for germline stem cells of testis. Ubiquitously expressed in all testicular cells throughout spermatogenesis. Ubiquitously expressed in all germline and somatic cells of the ovary.

It is found in the nucleus. Its subcellular location is the cytoplasm. Its pathway is tRNA modification; N(7)-methylguanine-tRNA biosynthesis. In terms of biological role, required for the Mettl1-dependent formation of N(7)-methylguanine at position 46 (m7G46) in tRNA. In the Mettl1-wuho methyltransferase complex, it is required to stabilize and induce conformational changes of the catalytic subunit. Required for binding of nanos mRNA and repression of translation by the mei-P26-bgcn-bam-sxl complex. May cooperate with mei-P26 and nanos to derepress the BMP signaling pathway. May cooperate with mei-P26 to suppress expression of a subset of microRNAs. May cooperate with mei-P26 to regulate bam expression levels in germline cells during gametogenesis. Required to promote mitosis to meiosis transition during gametogenesis. May regulate germline cell division in part by regulating ribosome biogenesis. This Drosophila mojavensis (Fruit fly) protein is tRNA (guanine-N(7)-)-methyltransferase non-catalytic subunit wuho.